A 264-amino-acid chain; its full sequence is Type III pantothenate kinase (264 aa).

6–13 (DSGNSRLK) serves as a coordination point for ATP. Residues Tyr92 and 99-102 (GADR) each bind substrate. Residue Asp101 is the Proton acceptor of the active site. Thr127 provides a ligand contact to ATP. Thr177 contacts substrate.

Belongs to the type III pantothenate kinase family. Homodimer. It depends on NH4(+) as a cofactor. K(+) serves as cofactor.

The protein resides in the cytoplasm. It carries out the reaction (R)-pantothenate + ATP = (R)-4'-phosphopantothenate + ADP + H(+). Its pathway is cofactor biosynthesis; coenzyme A biosynthesis; CoA from (R)-pantothenate: step 1/5. Functionally, catalyzes the phosphorylation of pantothenate (Pan), the first step in CoA biosynthesis. This Bordetella petrii (strain ATCC BAA-461 / DSM 12804 / CCUG 43448) protein is Type III pantothenate kinase.